The following is a 452-amino-acid chain: Pup--protein ligase (452 aa).

E9 is a binding site for Mg(2+). Residue R53 participates in ATP binding. Residue Y55 participates in Mg(2+) binding. D57 acts as the Proton acceptor in catalysis. E63 is a Mg(2+) binding site. Residues T66 and W419 each contribute to the ATP site.

Belongs to the Pup ligase/Pup deamidase family. Pup-conjugating enzyme subfamily.

It catalyses the reaction ATP + [prokaryotic ubiquitin-like protein]-L-glutamate + [protein]-L-lysine = ADP + phosphate + N(6)-([prokaryotic ubiquitin-like protein]-gamma-L-glutamyl)-[protein]-L-lysine.. It participates in protein degradation; proteasomal Pup-dependent pathway. It functions in the pathway protein modification; protein pupylation. Functionally, catalyzes the covalent attachment of the prokaryotic ubiquitin-like protein modifier Pup to the proteasomal substrate proteins, thereby targeting them for proteasomal degradation. This tagging system is termed pupylation. The ligation reaction involves the side-chain carboxylate of the C-terminal glutamate of Pup and the side-chain amino group of a substrate lysine. The polypeptide is Pup--protein ligase (Mycobacteroides abscessus (strain ATCC 19977 / DSM 44196 / CCUG 20993 / CIP 104536 / JCM 13569 / NCTC 13031 / TMC 1543 / L948) (Mycobacterium abscessus)).